Here is a 163-residue protein sequence, read N- to C-terminus: Nucleotide-binding protein Dhaf_3127 (163 aa).

It belongs to the YajQ family.

In terms of biological role, nucleotide-binding protein. This is Nucleotide-binding protein Dhaf_3127 from Desulfitobacterium hafniense (strain DSM 10664 / DCB-2).